Consider the following 278-residue polypeptide: Dermonecrotic toxin LhSicTox-alphaIV1ii (278 aa).

Residue His5 is part of the active site. The Mg(2+) site is built by Glu25 and Asp27. His41 acts as the Nucleophile in catalysis. 2 disulfides stabilise this stretch: Cys45–Cys51 and Cys47–Cys192. Asp85 is a Mg(2+) binding site.

The protein belongs to the arthropod phospholipase D family. Class II subfamily. The cofactor is Mg(2+). In terms of tissue distribution, expressed by the venom gland.

The protein resides in the secreted. It carries out the reaction an N-(acyl)-sphingosylphosphocholine = an N-(acyl)-sphingosyl-1,3-cyclic phosphate + choline. It catalyses the reaction an N-(acyl)-sphingosylphosphoethanolamine = an N-(acyl)-sphingosyl-1,3-cyclic phosphate + ethanolamine. The enzyme catalyses a 1-acyl-sn-glycero-3-phosphocholine = a 1-acyl-sn-glycero-2,3-cyclic phosphate + choline. The catalysed reaction is a 1-acyl-sn-glycero-3-phosphoethanolamine = a 1-acyl-sn-glycero-2,3-cyclic phosphate + ethanolamine. In terms of biological role, dermonecrotic toxins cleave the phosphodiester linkage between the phosphate and headgroup of certain phospholipids (sphingolipid and lysolipid substrates), forming an alcohol (often choline) and a cyclic phosphate. This toxin acts on sphingomyelin (SM). It may also act on ceramide phosphoethanolamine (CPE), lysophosphatidylcholine (LPC) and lysophosphatidylethanolamine (LPE), but not on lysophosphatidylserine (LPS), and lysophosphatidylglycerol (LPG). It acts by transphosphatidylation, releasing exclusively cyclic phosphate products as second products. Induces dermonecrosis, hemolysis, increased vascular permeability, edema, inflammatory response, and platelet aggregation. The protein is Dermonecrotic toxin LhSicTox-alphaIV1ii of Loxosceles hirsuta (Recluse spider).